Here is a 274-residue protein sequence, read N- to C-terminus: Dermonecrotic toxin SdSicTox-betaIIB2i (274 aa).

His5 is an active-site residue. Residues Glu25 and Asp27 each coordinate Mg(2+). The Nucleophile role is filled by His41. Disulfide bonds link Cys45/Cys51 and Cys47/Cys190. Asp85 provides a ligand contact to Mg(2+).

Belongs to the arthropod phospholipase D family. Class II subfamily. The cofactor is Mg(2+). In terms of tissue distribution, expressed by the venom gland.

Its subcellular location is the secreted. It carries out the reaction an N-(acyl)-sphingosylphosphocholine = an N-(acyl)-sphingosyl-1,3-cyclic phosphate + choline. The enzyme catalyses an N-(acyl)-sphingosylphosphoethanolamine = an N-(acyl)-sphingosyl-1,3-cyclic phosphate + ethanolamine. The catalysed reaction is a 1-acyl-sn-glycero-3-phosphocholine = a 1-acyl-sn-glycero-2,3-cyclic phosphate + choline. It catalyses the reaction a 1-acyl-sn-glycero-3-phosphoethanolamine = a 1-acyl-sn-glycero-2,3-cyclic phosphate + ethanolamine. Its function is as follows. Dermonecrotic toxins cleave the phosphodiester linkage between the phosphate and headgroup of certain phospholipids (sphingolipid and lysolipid substrates), forming an alcohol (often choline) and a cyclic phosphate. This toxin acts on sphingomyelin (SM). It may also act on ceramide phosphoethanolamine (CPE), lysophosphatidylcholine (LPC) and lysophosphatidylethanolamine (LPE), but not on lysophosphatidylserine (LPS), and lysophosphatidylglycerol (LPG). It acts by transphosphatidylation, releasing exclusively cyclic phosphate products as second products. Induces dermonecrosis, hemolysis, increased vascular permeability, edema, inflammatory response, and platelet aggregation. The sequence is that of Dermonecrotic toxin SdSicTox-betaIIB2i from Sicarius cf. damarensis (strain GJB-2008) (Six-eyed sand spider).